The sequence spans 138 residues: Beta-galactosidase (138 aa).

It belongs to the glycosyl hydrolase 2 family.

It catalyses the reaction Hydrolysis of terminal non-reducing beta-D-galactose residues in beta-D-galactosides.. This is Beta-galactosidase (lacZ) from Rhizobium radiobacter (Agrobacterium tumefaciens).